We begin with the raw amino-acid sequence, 163 residues long: Phosphopantetheine adenylyltransferase (163 aa).

S10 provides a ligand contact to substrate. ATP-binding positions include 10–11 (SF) and H18. Substrate is bound by residues K42, L74, and R88. Residues 89–91 (GLR), E99, and 124–130 (YSFLSSS) each bind ATP.

The protein belongs to the bacterial CoaD family. Homohexamer. The cofactor is Mg(2+).

The protein localises to the cytoplasm. The catalysed reaction is (R)-4'-phosphopantetheine + ATP + H(+) = 3'-dephospho-CoA + diphosphate. The protein operates within cofactor biosynthesis; coenzyme A biosynthesis; CoA from (R)-pantothenate: step 4/5. In terms of biological role, reversibly transfers an adenylyl group from ATP to 4'-phosphopantetheine, yielding dephospho-CoA (dPCoA) and pyrophosphate. This chain is Phosphopantetheine adenylyltransferase, found in Bacillus cereus (strain G9842).